The primary structure comprises 324 residues: 4-hydroxyphenylpyruvate 3-dimethylallyltransferase (324 aa).

Residues Arg160 and Glu281 each coordinate substrate.

It belongs to the aromatic prenyltransferase family. In terms of assembly, monomer.

The enzyme catalyses 3-(4-hydroxyphenyl)pyruvate + dimethylallyl diphosphate = 3-dimethylallyl-4-hydroxyphenylpyruvate + diphosphate. It functions in the pathway antibiotic biosynthesis. Functionally, magnesium-independent aromatic prenyltransferase that catalyzes the irreversible transfer of a dimethylallyl group to 4-hydroxyphenylpyruvate to produce the ring A structure in the clorobiocin biosynthesis pathway. Clorobiocin is an aminocoumarin family antibiotic. This chain is 4-hydroxyphenylpyruvate 3-dimethylallyltransferase, found in Streptomyces roseochromogenus subsp. oscitans.